A 301-amino-acid chain; its full sequence is MKIRVATRGSKLSLIQTEELLAQIKAVEPDVQFEIVVVKTTGDLIQDKPLFQIGVKGIFEKEVNLAVLRGEADMAVHSLKDLPSELTPGLVLAGFSKRAPPHDVLISRGGYTLETLPKGAVVGTSSVRRAEFLKAVRPDVEVKPLRGNVDTRVGKVLSGQYDAAVMAAAGLQRLYGSSPPVSIVPLRVEEVPPPPGQGIVVAVVKEEDSWLIDLLKKASDKTAAIEATAERAFLAGVGAGCHVAIGGVAKLTPQGSLEFTAGYAAGGAKYVVKVFGEDPVEVGKRAAQLIAEVRQKFKQRD.

At cysteine 241 the chain carries S-(dipyrrolylmethanemethyl)cysteine.

The protein belongs to the HMBS family. Dipyrromethane serves as cofactor.

It catalyses the reaction 4 porphobilinogen + H2O = hydroxymethylbilane + 4 NH4(+). Its pathway is porphyrin-containing compound metabolism; protoporphyrin-IX biosynthesis; coproporphyrinogen-III from 5-aminolevulinate: step 2/4. In terms of biological role, tetrapolymerization of the monopyrrole PBG into the hydroxymethylbilane pre-uroporphyrinogen in several discrete steps. The protein is Probable porphobilinogen deaminase of Pyrobaculum islandicum (strain DSM 4184 / JCM 9189 / GEO3).